The following is a 233-amino-acid chain: Adenosine 5'-phosphosulfate reductase (233 aa).

Cys120, Cys121, Cys203, and Cys206 together coordinate [4Fe-4S] cluster. The active-site Nucleophile; cysteine thiosulfonate intermediate is Cys229.

This sequence belongs to the PAPS reductase family. CysH subfamily. The cofactor is [4Fe-4S] cluster.

The protein localises to the cytoplasm. The catalysed reaction is [thioredoxin]-disulfide + sulfite + AMP + 2 H(+) = adenosine 5'-phosphosulfate + [thioredoxin]-dithiol. The protein operates within sulfur metabolism; hydrogen sulfide biosynthesis; sulfite from sulfate. Catalyzes the formation of sulfite from adenosine 5'-phosphosulfate (APS) using thioredoxin as an electron donor. The polypeptide is Adenosine 5'-phosphosulfate reductase (Lysinibacillus sphaericus (strain C3-41)).